Here is a 394-residue protein sequence, read N- to C-terminus: uncharacterized protein (394 aa).

11 helical membrane passes run Pro-10 to Ala-30, Phe-50 to Gly-70, Ile-79 to Leu-99, Ala-100 to Val-120, Thr-138 to Ala-158, Val-166 to Pro-186, Leu-218 to Leu-238, Phe-243 to Gly-263, Trp-291 to Leu-311, Leu-337 to Ala-357, and Gly-364 to Trp-384.

Belongs to the major facilitator superfamily.

It localises to the cell inner membrane. This is an uncharacterized protein from Escherichia coli (strain K12).